The sequence spans 390 residues: Digeranylgeranylglycerophospholipid reductase (390 aa).

Residues Ala18, Glu37, Cys48, Ala49, Ala51, Arg98, Val122, Asp278, Gly290, and Ile291 each contribute to the FAD site. A 2,3-bis-O-(geranylgeranyl)-sn-glycerol 1-phospholipid is bound at residue Val368.

Belongs to the geranylgeranyl reductase family. DGGGPL reductase subfamily. FAD is required as a cofactor.

The enzyme catalyses a 2,3-bis-O-phytanyl-sn-glycerol 1-phospholipid + 8 A = a 2,3-bis-O-(geranylgeranyl)-sn-glycerol 1-phospholipid + 8 AH2. It carries out the reaction 2,3-bis-O-(phytanyl)-sn-glycerol 1-phosphate + 8 A = 2,3-bis-O-(geranylgeranyl)-sn-glycerol 1-phosphate + 8 AH2. It catalyses the reaction CDP-2,3-bis-O-(geranylgeranyl)-sn-glycerol + 8 AH2 = CDP-2,3-bis-O-(phytanyl)-sn-glycerol + 8 A. The catalysed reaction is archaetidylserine + 8 AH2 = 2,3-bis-O-phytanyl-sn-glycero-3-phospho-L-serine + 8 A. The protein operates within membrane lipid metabolism; glycerophospholipid metabolism. Is involved in the reduction of 2,3-digeranylgeranylglycerophospholipids (unsaturated archaeols) into 2,3-diphytanylglycerophospholipids (saturated archaeols) in the biosynthesis of archaeal membrane lipids. Catalyzes the formation of archaetidic acid (2,3-di-O-phytanyl-sn-glyceryl phosphate) from 2,3-di-O-geranylgeranylglyceryl phosphate (DGGGP) via the hydrogenation of each double bond of the isoprenoid chains. Is also probably able to reduce double bonds of geranyl groups in CDP-2,3-bis-O-(geranylgeranyl)-sn-glycerol and archaetidylserine, thus acting at various stages in the biosynthesis of archaeal membrane lipids. The chain is Digeranylgeranylglycerophospholipid reductase from Methanococcus maripaludis (strain C5 / ATCC BAA-1333).